A 581-amino-acid chain; its full sequence is MSATDLVSELGARFGDAVLGEQTTRERFPTVWIRPEASAAVHRYLKHEVERPFRMLVDLWAIDETARKHREGQPPSGITIASHLMSHERNADIRLKVGLDAEYPSAKSIAGVYPNAAWYEREAYDMFGVEFEAQPHSLRILLPPGWEGHPMRKTQPGRATERPLFNMTAALFDAKEHALAADPEKFGLPTHRDGVELMILNYGPHSMATHGVFRIVLALDGEEIVAARPDIGFHHRGAEKMAERQTWHNFLPYTDRVDYLGGVMGEMPYLQAVEKACGITVPDRALTVRVMLSEMFRIMNHLLFYGTMAQDTGAMSPVFYMFVDRERGYRVIEAITGARMHPGYFRIGGLSMDLPQGWDRLVREFLDWMPARLADYEGMVLRNEIFQARTKGVAAYDTAMALDWGVTGPGLRATGSAWDVRKARPYSGFENFEFEIPVGHNGDCYDRTVVRVEEIRQSLKIIRQCVDNMPSGPIKADHPLTTPPPRERMLHDIETMIHHFVGASWGPVLPPGETTGQVETVRGLTQFALISDGEPSSYRTRIRTPSFPHLQMISAVAPGMMVADLVAYLGSIDYVMSDVDR.

Positions 1-172 are NADH dehydrogenase I subunit C; that stretch reads MSATDLVSEL…PLFNMTAALF (172 aa). Residues 196-581 form an NADH dehydrogenase I subunit D region; the sequence is ELMILNYGPH…IDYVMSDVDR (386 aa).

This sequence in the N-terminal section; belongs to the complex I 30 kDa subunit family. In the C-terminal section; belongs to the complex I 49 kDa subunit family. In terms of assembly, NDH-1 is composed of 13 different subunits. Subunits NuoB, CD, E, F, and G constitute the peripheral sector of the complex.

It is found in the cell inner membrane. The catalysed reaction is a quinone + NADH + 5 H(+)(in) = a quinol + NAD(+) + 4 H(+)(out). In terms of biological role, NDH-1 shuttles electrons from NADH, via FMN and iron-sulfur (Fe-S) centers, to quinones in the respiratory chain. The immediate electron acceptor for the enzyme in this species is believed to be ubiquinone. Couples the redox reaction to proton translocation (for every two electrons transferred, four hydrogen ions are translocated across the cytoplasmic membrane), and thus conserves the redox energy in a proton gradient. The polypeptide is NADH-quinone oxidoreductase subunit C/D (Rhodopseudomonas palustris (strain HaA2)).